We begin with the raw amino-acid sequence, 904 residues long: HTH-type transcriptional regulator MalT (904 aa).

Position 39–46 (39–46) interacts with ATP; the sequence is CPAGYGKT. The 66-residue stretch at 832–897 folds into the HTH luxR-type domain; the sequence is ELIRTSPLTQ…EAVQQAQQLL (66 aa). Positions 856-875 form a DNA-binding region, H-T-H motif; that stretch reads NDQIAGELAVAATTIKTHIR.

It belongs to the MalT family. In terms of assembly, monomer in solution. Oligomerizes to an active state in the presence of the positive effectors ATP and maltotriose.

With respect to regulation, activated by ATP and maltotriose, which are both required for DNA binding. In terms of biological role, positively regulates the transcription of the maltose regulon whose gene products are responsible for uptake and catabolism of malto-oligosaccharides. Specifically binds to the promoter region of its target genes, recognizing a short DNA motif called the MalT box. The protein is HTH-type transcriptional regulator MalT of Serratia proteamaculans (strain 568).